The chain runs to 444 residues: 23S rRNA (uracil(1939)-C(5))-methyltransferase RlmD (444 aa).

Residues 5-64 (KPKLNLTSQTARIVNLSHDGRGIARVNGKATFIQGALPGEVVEFQYTRIKKDFDEGKLLS) enclose the TRAM domain. Positions 77, 83, 86, and 166 each coordinate [4Fe-4S] cluster. S-adenosyl-L-methionine is bound by residues glutamine 276, phenylalanine 305, asparagine 310, glutamate 326, asparagine 353, and aspartate 374. Catalysis depends on cysteine 400, which acts as the Nucleophile.

It belongs to the class I-like SAM-binding methyltransferase superfamily. RNA M5U methyltransferase family. RlmD subfamily.

It carries out the reaction uridine(1939) in 23S rRNA + S-adenosyl-L-methionine = 5-methyluridine(1939) in 23S rRNA + S-adenosyl-L-homocysteine + H(+). Catalyzes the formation of 5-methyl-uridine at position 1939 (m5U1939) in 23S rRNA. The sequence is that of 23S rRNA (uracil(1939)-C(5))-methyltransferase RlmD from Legionella pneumophila (strain Corby).